The primary structure comprises 381 residues: Creatine kinase M-type (381 aa).

Residues 11–98 (KLNYSAAEEF…FDPVIEDRHG (88 aa)) enclose the Phosphagen kinase N-terminal domain. A Phosphagen kinase C-terminal domain is found at 125 to 367 (YVLSSRVRTG…KLMVEMEKRL (243 aa)). ATP-binding positions include 128-132 (SSRVR), His-191, Arg-236, Arg-292, 320-325 (RGTGGV), and Asp-335.

This sequence belongs to the ATP:guanido phosphotransferase family. In terms of assembly, dimer of identical or non-identical chains. With MM being the major form in skeletal muscle and myocardium, MB existing in myocardium, and BB existing in many tissues, especially brain.

The protein localises to the cytoplasm. It carries out the reaction creatine + ATP = N-phosphocreatine + ADP + H(+). In terms of biological role, reversibly catalyzes the transfer of phosphate between ATP and various phosphogens (e.g. creatine phosphate). Creatine kinase isoenzymes play a central role in energy transduction in tissues with large, fluctuating energy demands, such as skeletal muscle, heart, brain and spermatozoa. The chain is Creatine kinase M-type from Torpedo marmorata (Marbled electric ray).